The following is a 266-amino-acid chain: 3-methyl-2-oxobutanoate hydroxymethyltransferase 2 (266 aa).

Mg(2+)-binding residues include Asp45 and Asp84. 3-methyl-2-oxobutanoate-binding positions include 45–46 (DS), Asp84, and Lys112. Residue Glu114 participates in Mg(2+) binding. The active-site Proton acceptor is the Glu181.

Belongs to the PanB family. Homodecamer; pentamer of dimers. The cofactor is Mg(2+).

Its subcellular location is the cytoplasm. It catalyses the reaction 3-methyl-2-oxobutanoate + (6R)-5,10-methylene-5,6,7,8-tetrahydrofolate + H2O = 2-dehydropantoate + (6S)-5,6,7,8-tetrahydrofolate. It participates in cofactor biosynthesis; (R)-pantothenate biosynthesis; (R)-pantoate from 3-methyl-2-oxobutanoate: step 1/2. Catalyzes the reversible reaction in which hydroxymethyl group from 5,10-methylenetetrahydrofolate is transferred onto alpha-ketoisovalerate to form ketopantoate. This chain is 3-methyl-2-oxobutanoate hydroxymethyltransferase 2, found in Pseudomonas aeruginosa (strain UCBPP-PA14).